Reading from the N-terminus, the 152-residue chain is MIALIQRVKRADVRVGERVTGEIGPGLLALVCAERGDTEAAADKLLAKVLGYRVFSDAAGKMNLPVSNLDGAGRAGGLLLVSQFTLAADTNSGLRPSFTPAAPPDEGERLFDYFVRRARERHPIVATGEFGADMQVSLVNDGPVTFWLQTRA.

The Gly-cisPro motif, important for rejection of L-amino acids signature appears at Gly-142–Pro-143.

Belongs to the DTD family. As to quaternary structure, homodimer.

It localises to the cytoplasm. The enzyme catalyses glycyl-tRNA(Ala) + H2O = tRNA(Ala) + glycine + H(+). The catalysed reaction is a D-aminoacyl-tRNA + H2O = a tRNA + a D-alpha-amino acid + H(+). Functionally, an aminoacyl-tRNA editing enzyme that deacylates mischarged D-aminoacyl-tRNAs. Also deacylates mischarged glycyl-tRNA(Ala), protecting cells against glycine mischarging by AlaRS. Acts via tRNA-based rather than protein-based catalysis; rejects L-amino acids rather than detecting D-amino acids in the active site. By recycling D-aminoacyl-tRNA to D-amino acids and free tRNA molecules, this enzyme counteracts the toxicity associated with the formation of D-aminoacyl-tRNA entities in vivo and helps enforce protein L-homochirality. This Burkholderia mallei (strain NCTC 10247) protein is D-aminoacyl-tRNA deacylase.